Reading from the N-terminus, the 203-residue chain is Small ribosomal subunit protein uS4 (203 aa).

An S4 RNA-binding domain is found at 93 to 156 (RRLDNVVYRL…IKVPAILEAV (64 aa)).

The protein belongs to the universal ribosomal protein uS4 family. In terms of assembly, part of the 30S ribosomal subunit. Contacts protein S5. The interaction surface between S4 and S5 is involved in control of translational fidelity.

Functionally, one of the primary rRNA binding proteins, it binds directly to 16S rRNA where it nucleates assembly of the body of the 30S subunit. With S5 and S12 plays an important role in translational accuracy. The sequence is that of Small ribosomal subunit protein uS4 from Streptococcus suis (strain 98HAH33).